The chain runs to 312 residues: Cytochrome c biogenesis protein CcsA (312 aa).

8 consecutive transmembrane segments (helical) span residues 18–38, 48–68, 73–93, 102–122, 148–168, 216–236, 250–267, and 279–299; these read LGIL…LALF, FFTI…WILS, ISNL…GQLL, IIPV…CFVL, VMLS…VLFI, SILV…IWAN, TWAF…HMRI, and FATS…FLGI.

This sequence belongs to the CcmF/CycK/Ccl1/NrfE/CcsA family. May interact with ccs1.

The protein localises to the cellular thylakoid membrane. Required during biogenesis of c-type cytochromes (cytochrome c6 and cytochrome f) at the step of heme attachment. This is Cytochrome c biogenesis protein CcsA from Prochlorococcus marinus (strain MIT 9515).